Consider the following 1108-residue polypeptide: Isoleucine--tRNA ligase (1108 aa).

The 'HIGH' region motif lies at Pro53 to His63. The 'KMSKS' region signature appears at Lys654–Arg658. Lys657 provides a ligand contact to ATP.

It belongs to the class-I aminoacyl-tRNA synthetase family. IleS type 2 subfamily. In terms of assembly, monomer. Zn(2+) serves as cofactor.

Its subcellular location is the cytoplasm. It carries out the reaction tRNA(Ile) + L-isoleucine + ATP = L-isoleucyl-tRNA(Ile) + AMP + diphosphate. Functionally, catalyzes the attachment of isoleucine to tRNA(Ile). As IleRS can inadvertently accommodate and process structurally similar amino acids such as valine, to avoid such errors it has two additional distinct tRNA(Ile)-dependent editing activities. One activity is designated as 'pretransfer' editing and involves the hydrolysis of activated Val-AMP. The other activity is designated 'posttransfer' editing and involves deacylation of mischarged Val-tRNA(Ile). This Rickettsia bellii (strain RML369-C) protein is Isoleucine--tRNA ligase.